A 192-amino-acid polypeptide reads, in one-letter code: Ras-like GTP-binding protein O-RHO (192 aa).

12–19 (GDGACGKT) is a binding site for GTP. Residues 34 to 42 (YVPTVFENY) carry the Effector region motif. GTP-binding positions include 59–63 (DTAGQ) and 117–120 (NKKT). Cysteine methyl ester is present on C189. The S-geranylgeranyl cysteine moiety is linked to residue C189. A propeptide spans 190-192 (LLL) (removed in mature form).

The protein belongs to the small GTPase superfamily. Rho family.

The protein resides in the cell membrane. In Diplobatis ommata (Ocellated electric ray), this protein is Ras-like GTP-binding protein O-RHO.